The sequence spans 388 residues: tRNA (guanine-N(7)-)-methyltransferase (388 aa).

S-adenosyl-L-methionine-binding residues include glutamate 129, glutamate 154, and aspartate 181. The substrate site is built by lysine 207 and aspartate 237.

Belongs to the class I-like SAM-binding methyltransferase superfamily. TrmB family.

The catalysed reaction is guanosine(46) in tRNA + S-adenosyl-L-methionine = N(7)-methylguanosine(46) in tRNA + S-adenosyl-L-homocysteine. The protein operates within tRNA modification; N(7)-methylguanine-tRNA biosynthesis. Its function is as follows. Catalyzes the formation of N(7)-methylguanine at position 46 (m7G46) in tRNA. This chain is tRNA (guanine-N(7)-)-methyltransferase, found in Wolinella succinogenes (strain ATCC 29543 / DSM 1740 / CCUG 13145 / JCM 31913 / LMG 7466 / NCTC 11488 / FDC 602W) (Vibrio succinogenes).